Here is a 367-residue protein sequence, read N- to C-terminus: GDSL esterase/lipase 3 (367 aa).

An N-terminal signal peptide occupies residues 1-23; sequence MVRLVLIIFFVYTIILSIGSINC. The active-site Nucleophile is the serine 42. Residues asparagine 175, asparagine 194, and asparagine 321 are each glycosylated (N-linked (GlcNAc...) asparagine). Residues aspartate 329 and histidine 332 contribute to the active site. Residue asparagine 351 is glycosylated (N-linked (GlcNAc...) asparagine).

The protein belongs to the 'GDSL' lipolytic enzyme family.

It localises to the secreted. This is GDSL esterase/lipase 3 (GLIP3) from Arabidopsis thaliana (Mouse-ear cress).